The primary structure comprises 163 residues: 3-hydroxyacyl-[acyl-carrier-protein] dehydratase FabZ (163 aa).

Residue H61 is part of the active site.

The protein belongs to the thioester dehydratase family. FabZ subfamily.

The protein resides in the cytoplasm. It catalyses the reaction a (3R)-hydroxyacyl-[ACP] = a (2E)-enoyl-[ACP] + H2O. In terms of biological role, involved in unsaturated fatty acids biosynthesis. Catalyzes the dehydration of short chain beta-hydroxyacyl-ACPs and long chain saturated and unsaturated beta-hydroxyacyl-ACPs. The chain is 3-hydroxyacyl-[acyl-carrier-protein] dehydratase FabZ from Dinoroseobacter shibae (strain DSM 16493 / NCIMB 14021 / DFL 12).